The chain runs to 540 residues: 2,3-bisphosphoglycerate-independent phosphoglycerate mutase (540 aa).

The Mn(2+) site is built by Asp-24 and Ser-74. Ser-74 functions as the Phosphoserine intermediate in the catalytic mechanism. Substrate is bound by residues His-135, 165–166 (RD), Arg-197, Arg-203, 268–271 (RPDR), and Lys-341. The Mn(2+) site is built by Asp-408, His-412, Asp-449, His-450, and His-467.

The protein belongs to the BPG-independent phosphoglycerate mutase family. As to quaternary structure, monomer. Mn(2+) serves as cofactor.

The catalysed reaction is (2R)-2-phosphoglycerate = (2R)-3-phosphoglycerate. The protein operates within carbohydrate degradation; glycolysis; pyruvate from D-glyceraldehyde 3-phosphate: step 3/5. In terms of biological role, catalyzes the interconversion of 2-phosphoglycerate and 3-phosphoglycerate. This chain is 2,3-bisphosphoglycerate-independent phosphoglycerate mutase, found in Prochlorococcus marinus (strain MIT 9313).